The sequence spans 120 residues: uncharacterized protein (120 aa).

Transmembrane regions (helical) follow at residues 24–44 (ALLG…ALCY), 61–81 (IGVV…NLAV), and 86–106 (PLGK…GIVV).

It to M.leprae ML1176.

Its subcellular location is the cell membrane. This is an uncharacterized protein from Mycobacterium bovis (strain ATCC BAA-935 / AF2122/97).